Consider the following 313-residue polypeptide: Ribosomal RNA small subunit methyltransferase I (313 aa).

The interval 1–23 (MASIQLARTTRGGDGVARADGTR) is disordered.

This sequence belongs to the methyltransferase superfamily. RsmI family.

It localises to the cytoplasm. It carries out the reaction cytidine(1402) in 16S rRNA + S-adenosyl-L-methionine = 2'-O-methylcytidine(1402) in 16S rRNA + S-adenosyl-L-homocysteine + H(+). Functionally, catalyzes the 2'-O-methylation of the ribose of cytidine 1402 (C1402) in 16S rRNA. The chain is Ribosomal RNA small subunit methyltransferase I from Micromonospora olivasterospora.